The sequence spans 131 residues: Small ribosomal subunit protein uS8 (131 aa).

Belongs to the universal ribosomal protein uS8 family. As to quaternary structure, part of the 30S ribosomal subunit. Contacts proteins S5 and S12.

Functionally, one of the primary rRNA binding proteins, it binds directly to 16S rRNA central domain where it helps coordinate assembly of the platform of the 30S subunit. The polypeptide is Small ribosomal subunit protein uS8 (Methylobacillus flagellatus (strain ATCC 51484 / DSM 6875 / VKM B-1610 / KT)).